An 86-amino-acid chain; its full sequence is ATP synthase subunit c (86 aa).

The next 2 membrane-spanning stretches (helical) occupy residues 8-28 and 66-86; these read VLAA…GAGI and GIYA…IGML.

The protein belongs to the ATPase C chain family. F-type ATPases have 2 components, F(1) - the catalytic core - and F(0) - the membrane proton channel. F(1) has five subunits: alpha(3), beta(3), gamma(1), delta(1), epsilon(1). F(0) has three main subunits: a(1), b(2) and c(10-14). The alpha and beta chains form an alternating ring which encloses part of the gamma chain. F(1) is attached to F(0) by a central stalk formed by the gamma and epsilon chains, while a peripheral stalk is formed by the delta and b chains.

The protein localises to the cell membrane. Functionally, f(1)F(0) ATP synthase produces ATP from ADP in the presence of a proton or sodium gradient. F-type ATPases consist of two structural domains, F(1) containing the extramembraneous catalytic core and F(0) containing the membrane proton channel, linked together by a central stalk and a peripheral stalk. During catalysis, ATP synthesis in the catalytic domain of F(1) is coupled via a rotary mechanism of the central stalk subunits to proton translocation. Key component of the F(0) channel; it plays a direct role in translocation across the membrane. A homomeric c-ring of between 10-14 subunits forms the central stalk rotor element with the F(1) delta and epsilon subunits. This is ATP synthase subunit c from Natranaerobius thermophilus (strain ATCC BAA-1301 / DSM 18059 / JW/NM-WN-LF).